Consider the following 179-residue polypeptide: Ribulose bisphosphate carboxylase small subunit, chloroplastic 5 (179 aa).

The transit peptide at 1 to 58 (MASSATMLSSVATAACAAPAQASMVAPFVGLKSASAFPVTQKTATGLSTLPSNGGRVQ) directs the protein to the chloroplast.

It belongs to the RuBisCO small chain family. As to quaternary structure, heterohexadecamer of 8 large and 8 small subunits.

It localises to the plastid. The protein resides in the chloroplast. RuBisCO catalyzes two reactions: the carboxylation of D-ribulose 1,5-bisphosphate, the primary event in carbon dioxide fixation, as well as the oxidative fragmentation of the pentose substrate. Both reactions occur simultaneously and in competition at the same active site. Although the small subunit is not catalytic it is essential for maximal activity. This is Ribulose bisphosphate carboxylase small subunit, chloroplastic 5 from Fritillaria agrestis (Stinkbells).